A 185-amino-acid polypeptide reads, in one-letter code: Heavy metal-associated isoprenylated plant protein 11 (185 aa).

Positions glutamine 39–alanine 106 constitute an HMA domain. Basic and acidic residues predominate over residues isoleucine 109–proline 158. The segment at isoleucine 109 to methionine 185 is disordered. Cysteine 182 bears the Cysteine methyl ester mark. Cysteine 182 carries the S-farnesyl cysteine lipid modification. Positions isoleucine 183 to methionine 185 are cleaved as a propeptide — removed in mature form.

It belongs to the HIPP family.

Its function is as follows. Probable heavy-metal-binding protein. This chain is Heavy metal-associated isoprenylated plant protein 11, found in Arabidopsis thaliana (Mouse-ear cress).